A 437-amino-acid chain; its full sequence is Transcriptional modulator WTM1 (437 aa).

The WD 1 repeat unit spans residues 103 to 144; it reads YQGETVSKMAYLDKTGETTLLSMSKNGSLAWFKEGIKVPIHI. Phosphothreonine is present on threonine 187. Serine 200 carries the phosphoserine modification. 3 WD repeats span residues 221 to 259, 264 to 304, and 326 to 366; these read PGTT…KPIW, PKNG…AATT, and AGGD…SKYN. The disordered stretch occupies residues 368–404; the sequence is DDTIAPPQDATEESQTKSLRFLHKGGSRRSPKQIGRR. Threonine 370 carries the phosphothreonine modification. Over residues 387–402 the composition is skewed to basic residues; the sequence is RFLHKGGSRRSPKQIG. Threonine 406 carries the post-translational modification Phosphothreonine.

As to quaternary structure, interacts with KAP122.

It is found in the cytoplasm. It localises to the nucleus. In terms of biological role, transcriptional modulator with roles in meiotic regulation and silencing. Acts either as an adapter to facilitate nuclear import by KAP122 of the RNR2-RNR4 heterodimer, also called beta-beta' subunit, which corresponds to the small subunit of the ribonucleotide reductase (RNR); or as an anchor to retain RNR2-RNR4 in the nucleus. The sequence is that of Transcriptional modulator WTM1 (WTM1) from Saccharomyces cerevisiae (strain ATCC 204508 / S288c) (Baker's yeast).